The primary structure comprises 248 residues: MAGHSKWAQIKRQKQAADFRKGQIFSKLAREIHVAVREGGPNPETNVRLRMAIERARREGMPKDTIENAIAKASGAAGGAAEYETIVYEGYGPGGVAIMAIALTDNRNRTASVVRHIFSKYGGSLGETGSVAWQFETVGQIVVATDGHDPEEIALAAIDAGARDFEVEDDSVIITTDPDQLSDVAEKLEAAGYQIRQADIQRIPTTTVELEGGQAQSALKLLEALEDLDDVQEVYTNASFPAEVRSAV.

Belongs to the TACO1 family.

It localises to the cytoplasm. The sequence is that of Probable transcriptional regulatory protein trd_1132 from Thermomicrobium roseum (strain ATCC 27502 / DSM 5159 / P-2).